The chain runs to 634 residues: SPARC-like protein 1 (634 aa).

A signal peptide spans 1-16 (MKAVLLLLYALGIAAA). Residues 50 to 335 (ADIEKHPNHK…DDSKHGASDD (286 aa)) form a disordered region. Basic and acidic residues predominate over residues 51–62 (DIEKHPNHKAEK). Ser-68, Ser-76, and Ser-84 each carry phosphoserine. Residues 73 to 83 (HEQSTEQDKTY) are compositionally biased toward basic and acidic residues. Residues 89-99 (LKDEEDGDGDL) are compositionally biased toward acidic residues. A compositionally biased stretch (polar residues) spans 131–144 (TVSTPFVDSDQPAN). Asn-144 carries N-linked (GlcNAc...) asparagine glycosylation. 2 positions are modified to phosphoserine: Ser-151 and Ser-159. Acidic residues-rich tracts occupy residues 189–198 (EKEEEEDPED) and 205–214 (NQEEEKEPPE). The span at 233-258 (QESSQPTQISKTKNDFEQGSQGQEGD) shows a compositional bias: polar residues. Phosphoserine is present on Ser-259. Basic and acidic residues-rich tracts occupy residues 263–276 (GEDK…HLPH) and 292–303 (GNRKDTDEEKAV). 2 positions are modified to phosphoserine: Ser-333 and Ser-340. The tract at residues 360–398 (EETPDESENRSEAGDNQGAKKAESSPNAEPSDEGNSRGH) is disordered. Positions 366–382 (SENRSEAGDNQGAKKAE) are enriched in basic and acidic residues. N-linked (GlcNAc...) asparagine glycosylation occurs at Asn-368. Phosphoserine occurs at positions 370 and 390. The Follistatin-like domain maps to 402-424 (SCMNFQCKRGHTCKTDQHGKPHC). 7 disulfide bridges follow: Cys-403–Cys-414, Cys-408–Cys-424, Cys-426–Cys-460, Cys-432–Cys-453, Cys-442–Cys-479, Cys-485–Cys-596, and Cys-604–Cys-620. One can recognise a Kazal-like domain in the interval 420 to 481 (GKPHCVCQDP…QLDYFGACKS (62 aa)). N-linked (GlcNAc...) asparagine glycosylation occurs at Asn-446. The EF-hand domain maps to 592-627 (PMEHCITRFFEECDPNKDKHITLKEWGHCFGIKEED). Ca(2+)-binding residues include Asp-605, Asn-607, Asp-609, His-611, and Glu-616.

Belongs to the SPARC family. As to expression, expressed in many types of neurons in the brain.

It localises to the secreted. The protein localises to the extracellular space. Its subcellular location is the extracellular matrix. The sequence is that of SPARC-like protein 1 (Sparcl1) from Rattus norvegicus (Rat).